A 380-amino-acid chain; its full sequence is NADPH oxidoreductase (380 aa).

Residues 58 to 164 (ARELRGRILG…AAPQGNFVLP (107 aa)) enclose the FAD-binding FR-type domain. Residues 299–380 (GTVTFARSGK…AASGDCVLDI (82 aa)) enclose the 2Fe-2S ferredoxin-type domain. 4 residues coordinate [2Fe-2S] cluster: cysteine 333, cysteine 338, cysteine 341, and cysteine 368.

In terms of assembly, interacts with DesA3 to form a functional acyl-CoA desaturase complex. [2Fe-2S] cluster is required as a cofactor. It depends on FAD as a cofactor.

Its subcellular location is the cell membrane. Its pathway is lipid metabolism; fatty acid metabolism. In terms of biological role, is likely involved in the aerobic desaturation system responsible for the synthesis of oleic acid from stearoyl-CoA; oleic acid is a precursor of mycobacterial membrane phospholipids and triglycerides. Is the electron transfer partner for the stearoyl-CoA 9-desaturase DesA3. Catalyzes electron transfer reaction between NADPH and the diiron center of DesA3. Cannot use NADH. The protein is NADPH oxidoreductase of Mycobacterium tuberculosis (strain ATCC 25618 / H37Rv).